A 191-amino-acid chain; its full sequence is Protein Ves (191 aa).

The protein belongs to the Ves family.

The sequence is that of Protein Ves from Escherichia coli (strain K12 / MC4100 / BW2952).